The chain runs to 683 residues: Dipeptidyl-peptidase 5 (683 aa).

A signal peptide spans 1 to 19; sequence MHSLFKQLVFFLVMTLTAA. 6 N-linked (GlcNAc...) asparagine glycosylation sites follow: Asn53, Asn69, Asn103, Asn116, Asn126, and Asn400. Active-site charge relay system residues include Ser535, Asp617, and His649.

Belongs to the peptidase S9C family.

Its subcellular location is the secreted. It localises to the cytoplasm. The protein localises to the nucleus. This is Dipeptidyl-peptidase 5 from Schizosaccharomyces pombe (strain 972 / ATCC 24843) (Fission yeast).